Consider the following 446-residue polypeptide: Transcriptional adapter 2-alpha (446 aa).

The ZZ-type zinc-finger motif lies at 12–69; it reads FDKPPCRGCSSYLTEPYVKCAECGPPPFLLCLQCFTRGFEYKKHQSDHTYEIMTSDFP. Positions 17, 20, 31, 34, 42, 45, 55, and 59 each coordinate Zn(2+). The SANT domain maps to 70 to 122; the sequence is VLDPNWTAQEEMALLEAVMDCGFGNWQDVANQMCTKSKEECEKHYMKHFINNP. The tract at residues 345-375 is disordered; it reads DIDSGPTPAAPIPSNSGRRSAPPLNLTGLPG. Residues 359–446 enclose the SWIRM domain; the sequence is NSGRRSAPPL…LIREGYITKA (88 aa). A DNA-binding region spans residues 429–438; the sequence is KTRKIYDFLI.

Its subcellular location is the nucleus. The protein localises to the chromosome. Functionally, component of some complex with histone acetyltransferase activity. Required for the function of some acidic activation domains, which activate transcription from a distant site. Binds double-stranded DNA. Binds dinucleosomes, probably at the linker region between neighboring nucleosomes. Plays a role in chromatin remodeling. The chain is Transcriptional adapter 2-alpha (TADA2A) from Gallus gallus (Chicken).